The primary structure comprises 236 residues: Transmembrane protein 70 homolog, mitochondrial (236 aa).

A mitochondrion-targeting transit peptide spans 1–64 (MLGLRAMLPK…WLSVKSTKTE (64 aa)). 2 consecutive transmembrane segments (helical) span residues 83–103 (MVKF…PILL) and 116–136 (VFLC…LHFI).

Belongs to the TMEM70 family. In terms of assembly, associates with mitochondrial complex I assembly intermediates during its biogenesis.

The protein localises to the mitochondrion membrane. In terms of biological role, scaffold protein that participates in the c-ring assembly of mitochondrial ATP synthase (F(1)F(0) ATP synthase or complex V). Also binds the mitochondrial proton-transporting ATP synthase complex I and may play a role in the stability of its membrane-bound subassemblies. The polypeptide is Transmembrane protein 70 homolog, mitochondrial (Drosophila melanogaster (Fruit fly)).